The sequence spans 102 residues: Large ribosomal subunit protein bL21 (102 aa).

Residues 80–91 show a composition bias toward basic residues; the sequence is KNSKRKKGHRQP. Residues 80–102 are disordered; sequence KNSKRKKGHRQPYTKLTIDKINA.

This sequence belongs to the bacterial ribosomal protein bL21 family. Part of the 50S ribosomal subunit. Contacts protein L20.

Its function is as follows. This protein binds to 23S rRNA in the presence of protein L20. The polypeptide is Large ribosomal subunit protein bL21 (Staphylococcus aureus (strain Mu3 / ATCC 700698)).